Consider the following 405-residue polypeptide: Transposase from transposon Tn916 (405 aa).

Positions 79–163 (GKKMTLCQLY…SLKASFYIAI (85 aa)) constitute a Core-binding (CB) domain. The Tyr recombinase domain maps to 186 to 392 (VPKTVLTEEQ…TFDSAMAEMK (207 aa)). Active-site residues include Arg225, Lys264, His343, Arg346, and His369. Tyr379 acts as the O-(3'-phospho-DNA)-tyrosine intermediate in catalysis.

The protein belongs to the 'phage' integrase family.

This chain is Transposase from transposon Tn916 (Int-Tn), found in Enterococcus faecalis (Streptococcus faecalis).